The following is a 378-amino-acid chain: Apoptosis-inducing factor 1 (378 aa).

Residues 7–25 (NIVVVGAGVFGVSVANHLY) form a helical membrane-spanning segment. FAD contacts are provided by residues 12-16 (GAGVF), R51, K56, and D283.

Belongs to the FAD-dependent oxidoreductase family. The cofactor is FAD.

Its subcellular location is the mitochondrion outer membrane. The protein localises to the nucleus. Its function is as follows. Putative FAD-dependent oxidoreductase involved in the resistance to cercosporin and other singlet oxygen-generating photosensitizers. Translocates from mitochondria to the nucleus under apoptotic conditions, where it degrades DNA and induces apoptosis. This is Apoptosis-inducing factor 1 (AIF1) from Saccharomyces cerevisiae (strain ATCC 204508 / S288c) (Baker's yeast).